Consider the following 497-residue polypeptide: Glycerol kinase (497 aa).

Thr12 serves as a coordination point for ADP. Thr12, Thr13, and Ser14 together coordinate ATP. Thr12 contributes to the sn-glycerol 3-phosphate binding site. Arg16 provides a ligand contact to ADP. Residues Arg82, Glu83, Tyr134, and Asp243 each coordinate sn-glycerol 3-phosphate. Arg82, Glu83, Tyr134, Asp243, and Gln244 together coordinate glycerol. Residues Thr265 and Gly308 each contribute to the ADP site. Residues Thr265, Gly308, Gln312, and Gly411 each contribute to the ATP site. Gly411 is a binding site for ADP.

It belongs to the FGGY kinase family.

It catalyses the reaction glycerol + ATP = sn-glycerol 3-phosphate + ADP + H(+). Its pathway is polyol metabolism; glycerol degradation via glycerol kinase pathway; sn-glycerol 3-phosphate from glycerol: step 1/1. Inhibited by fructose 1,6-bisphosphate (FBP). Its function is as follows. Key enzyme in the regulation of glycerol uptake and metabolism. Catalyzes the phosphorylation of glycerol to yield sn-glycerol 3-phosphate. In Xanthobacter autotrophicus (strain ATCC BAA-1158 / Py2), this protein is Glycerol kinase.